The following is a 525-amino-acid chain: Light-independent protochlorophyllide reductase subunit B (525 aa).

D36 is a binding site for [4Fe-4S] cluster. D292 (proton donor) is an active-site residue. G428 to L429 lines the substrate pocket. Residues P447 to E470 form a disordered region. The segment covering A460–E470 has biased composition (low complexity).

This sequence belongs to the ChlB/BchB/BchZ family. Protochlorophyllide reductase is composed of three subunits; BchL, BchN and BchB. Forms a heterotetramer of two BchB and two BchN subunits. [4Fe-4S] cluster is required as a cofactor.

It catalyses the reaction chlorophyllide a + oxidized 2[4Fe-4S]-[ferredoxin] + 2 ADP + 2 phosphate = protochlorophyllide a + reduced 2[4Fe-4S]-[ferredoxin] + 2 ATP + 2 H2O. It participates in porphyrin-containing compound metabolism; bacteriochlorophyll biosynthesis (light-independent). In terms of biological role, component of the dark-operative protochlorophyllide reductase (DPOR) that uses Mg-ATP and reduced ferredoxin to reduce ring D of protochlorophyllide (Pchlide) to form chlorophyllide a (Chlide). This reaction is light-independent. The NB-protein (BchN-BchB) is the catalytic component of the complex. This chain is Light-independent protochlorophyllide reductase subunit B, found in Chlorobium luteolum (strain DSM 273 / BCRC 81028 / 2530) (Pelodictyon luteolum).